Reading from the N-terminus, the 202-residue chain is Small ribosomal subunit protein uS4 (202 aa).

Positions 1 to 13 (MSRYRGPRLRITR) are enriched in basic residues. The segment at 1–43 (MSRYRGPRLRITRRLGDLPGLTRKAAKRSHPPGQHGQARRKRS) is disordered. In terms of domain architecture, S4 RNA-binding spans 90 to 152 (NRLDNVCFRL…KASKQLAQAN (63 aa)).

The protein belongs to the universal ribosomal protein uS4 family. Part of the 30S ribosomal subunit. Contacts protein S5. The interaction surface between S4 and S5 is involved in control of translational fidelity.

One of the primary rRNA binding proteins, it binds directly to 16S rRNA where it nucleates assembly of the body of the 30S subunit. Its function is as follows. With S5 and S12 plays an important role in translational accuracy. The polypeptide is Small ribosomal subunit protein uS4 (Prochlorococcus marinus (strain NATL2A)).